The sequence spans 888 residues: Alanine--tRNA ligase (888 aa).

Zn(2+) is bound by residues His571, His575, Cys674, and His678.

The protein belongs to the class-II aminoacyl-tRNA synthetase family. Requires Zn(2+) as cofactor.

It is found in the cytoplasm. It catalyses the reaction tRNA(Ala) + L-alanine + ATP = L-alanyl-tRNA(Ala) + AMP + diphosphate. Catalyzes the attachment of alanine to tRNA(Ala) in a two-step reaction: alanine is first activated by ATP to form Ala-AMP and then transferred to the acceptor end of tRNA(Ala). Also edits incorrectly charged Ser-tRNA(Ala) and Gly-tRNA(Ala) via its editing domain. This chain is Alanine--tRNA ligase, found in Nocardia farcinica (strain IFM 10152).